We begin with the raw amino-acid sequence, 379 residues long: Acyl-CoA dehydrogenase (379 aa).

The protein belongs to the acyl-CoA dehydrogenase family. FAD serves as cofactor.

It carries out the reaction a 2,3-saturated acyl-CoA + A = a 2,3-dehydroacyl-CoA + AH2. This chain is Acyl-CoA dehydrogenase (mmgC), found in Bacillus subtilis (strain 168).